The primary structure comprises 179 residues: Large ribosomal subunit protein uL6 (179 aa).

Belongs to the universal ribosomal protein uL6 family. In terms of assembly, part of the 50S ribosomal subunit.

Functionally, this protein binds to the 23S rRNA, and is important in its secondary structure. It is located near the subunit interface in the base of the L7/L12 stalk, and near the tRNA binding site of the peptidyltransferase center. The polypeptide is Large ribosomal subunit protein uL6 (Prochlorococcus marinus (strain MIT 9313)).